The primary structure comprises 581 residues: Arginine--tRNA ligase (581 aa).

A 'HIGH' region motif is present at residues 123–133 (PNVAKEMHVGH).

This sequence belongs to the class-I aminoacyl-tRNA synthetase family. As to quaternary structure, monomer.

It is found in the cytoplasm. The enzyme catalyses tRNA(Arg) + L-arginine + ATP = L-arginyl-tRNA(Arg) + AMP + diphosphate. The protein is Arginine--tRNA ligase of Blochmanniella pennsylvanica (strain BPEN).